A 676-amino-acid polypeptide reads, in one-letter code: Kojibiose hydrolase (676 aa).

The signal sequence occupies residues 1–20 (MNKGIIQLLALSLFCISVKA). Glutamate 469 serves as the catalytic Proton donor. Glutamate 613 functions as the Proton acceptor in the catalytic mechanism.

Belongs to the glycosyl hydrolase 65 family.

The enzyme catalyses kojibiose + H2O = beta-D-glucose + D-glucose. Its function is as follows. Glycosidase that specifically hydrolyzes kojibiose to beta-glucose and glucose. Besides its activity on kojibiose, is also able to act on alpha-1,2-oligoglucans with a higher degree of polymerization. Shows weak activity on nigerose, but is not capable of breaking down trehalose, maltose, isomaltose, sucrose, isomaltulose, turanose or melezitose. The chain is Kojibiose hydrolase from Mucilaginibacter mallensis.